Reading from the N-terminus, the 486-residue chain is Malonate-semialdehyde dehydrogenase (486 aa).

NAD(+) is bound by residues phenylalanine 154, lysine 178, glutamate 181, arginine 182, and serine 231. The active-site Nucleophile is the cysteine 286. NAD(+) is bound at residue glutamate 386.

Belongs to the aldehyde dehydrogenase family. IolA subfamily. In terms of assembly, homotetramer.

The catalysed reaction is 3-oxopropanoate + NAD(+) + CoA + H2O = hydrogencarbonate + acetyl-CoA + NADH + H(+). It catalyses the reaction 2-methyl-3-oxopropanoate + NAD(+) + CoA + H2O = propanoyl-CoA + hydrogencarbonate + NADH + H(+). It participates in polyol metabolism; myo-inositol degradation into acetyl-CoA; acetyl-CoA from myo-inositol: step 7/7. Functionally, catalyzes the oxidation of malonate semialdehyde (MSA) and methylmalonate semialdehyde (MMSA) into acetyl-CoA and propanoyl-CoA, respectively. Is involved in a myo-inositol catabolic pathway. Bicarbonate, and not CO2, is the end-product of the enzymatic reaction. In Bacillus cereus (strain B4264), this protein is Malonate-semialdehyde dehydrogenase.